The following is a 371-amino-acid chain: Leucine-rich repeat-containing protein 58 (371 aa).

At Ser-24 the chain carries Phosphoserine. 9 LRR repeats span residues Ala-45–Gly-66, His-69–Arg-91, Gly-92–Leu-113, Ser-121–Arg-143, Ala-144–Gln-166, Ser-167–Pro-189, Ser-190–Leu-211, Ser-213–Leu-234, and His-236–Thr-256. Positions Ser-340–Glu-351 are enriched in low complexity. Residues Ser-340–Ala-361 form a disordered region.

In Homo sapiens (Human), this protein is Leucine-rich repeat-containing protein 58 (LRRC58).